The sequence spans 444 residues: MNDTITAIATPNINSAISIIRISGPNTYEIVSKITKKEITKTGYTFVKEFIYQNDLIIDEVIILKYVAPKSFTGEDLIEINCHGGVLITNKILDLILESGARLAENGEFTKRAFLNNKLTLRQANSINNLIFSKTDIATNLSSNGIINSNNDFFLDIKEKIFYLIGKIEVNIDYPEYEDVEQVTAKEFNLEVKEIIDKLNKTINDFNKVSYLYNGLNVVIVGKPNVGKSSLLNSLIKKNKAIVSDIKGTTRDLVTESINLEGLLLNFIDTAGIRESKNKIENIGIKKTMASIKEADLILFLIDDSKKIDKKEKEILNLIKNKNYIIVKNKSDLKVNANSELKGISISALKKDVKPLVNEIKTNLKQGDFNIANNLAICSDNELKIIKQVLLVLKKSYANSLSGFPLDLLVEDLKVAYEKICTIMGLSEDLNIIDKMFKNFCLGK.

(6S)-5-formyl-5,6,7,8-tetrahydrofolate-binding residues include Arg21, Glu79, and Lys118. Positions 215–365 (GLNVVIVGKP…LVNEIKTNLK (151 aa)) constitute a TrmE-type G domain. Residue Asn225 coordinates K(+). Residues 225-230 (NVGKSS), 244-250 (SDIKGTT), and 269-272 (DTAG) contribute to the GTP site. Ser229 is a binding site for Mg(2+). The K(+) site is built by Ser244, Ile246, and Thr249. Residue Thr250 coordinates Mg(2+). Residue Lys444 coordinates (6S)-5-formyl-5,6,7,8-tetrahydrofolate.

This sequence belongs to the TRAFAC class TrmE-Era-EngA-EngB-Septin-like GTPase superfamily. TrmE GTPase family. As to quaternary structure, homodimer. Heterotetramer of two MnmE and two MnmG subunits. The cofactor is K(+).

It is found in the cytoplasm. Its function is as follows. Exhibits a very high intrinsic GTPase hydrolysis rate. Involved in the addition of a carboxymethylaminomethyl (cmnm) group at the wobble position (U34) of certain tRNAs, forming tRNA-cmnm(5)s(2)U34. This Malacoplasma penetrans (strain HF-2) (Mycoplasma penetrans) protein is tRNA modification GTPase MnmE.